Consider the following 283-residue polypeptide: Pantothenate synthetase (283 aa).

30 to 37 (MGNLHDGH) is a binding site for ATP. The active-site Proton donor is His-37. Gln-61 contributes to the (R)-pantoate binding site. Residue Gln-61 participates in beta-alanine binding. ATP is bound at residue 149–152 (GEKD). Gln-155 lines the (R)-pantoate pocket. An ATP-binding site is contributed by 186 to 189 (LSSR).

It belongs to the pantothenate synthetase family. In terms of assembly, homodimer.

The protein resides in the cytoplasm. The enzyme catalyses (R)-pantoate + beta-alanine + ATP = (R)-pantothenate + AMP + diphosphate + H(+). It participates in cofactor biosynthesis; (R)-pantothenate biosynthesis; (R)-pantothenate from (R)-pantoate and beta-alanine: step 1/1. Catalyzes the condensation of pantoate with beta-alanine in an ATP-dependent reaction via a pantoyl-adenylate intermediate. In Escherichia coli (strain ATCC 8739 / DSM 1576 / NBRC 3972 / NCIMB 8545 / WDCM 00012 / Crooks), this protein is Pantothenate synthetase.